Reading from the N-terminus, the 551-residue chain is Lysine--tRNA ligase (551 aa).

The 'HIGH' region motif lies at 54–62 (PSGLPHIGT). Residues 303-307 (KISKS) carry the 'KMSKS' region motif. Lys306 contributes to the ATP binding site.

The protein belongs to the class-I aminoacyl-tRNA synthetase family.

The protein localises to the cytoplasm. It carries out the reaction tRNA(Lys) + L-lysine + ATP = L-lysyl-tRNA(Lys) + AMP + diphosphate. In Brucella melitensis biotype 1 (strain ATCC 23456 / CCUG 17765 / NCTC 10094 / 16M), this protein is Lysine--tRNA ligase.